The primary structure comprises 643 residues: Rhophilin-1 (643 aa).

A disordered region spans residues 1–43 (MILEERPDGQGTGEESSRPQDDGSIRKGYGSFVQNQPGQLQSH). Residues 15-25 (ESSRPQDDGSI) are compositionally biased toward basic and acidic residues. The REM-1 domain occupies 30 to 104 (GSFVQNQPGQ…LAELSTSVDV (75 aa)). Residue Ser31 is modified to Phosphoserine. Polar residues predominate over residues 32-42 (FVQNQPGQLQS). The 348-residue stretch at 115–462 (PMIPLGLKET…LAKYSQLERE (348 aa)) folds into the BRO1 domain. In terms of domain architecture, PDZ spans 500 to 577 (PVHMTRGEGS…EGVSLQVVSL (78 aa)).

This sequence belongs to the RHPN family. Binds specifically to GTP-Rho. Interacts with ROPN1. In terms of tissue distribution, highly expressed in testis.

Functionally, has no enzymatic activity. May serve as a target for Rho, and interact with some cytoskeletal component upon Rho binding or relay a Rho signal to other molecules. The polypeptide is Rhophilin-1 (Rhpn1) (Mus musculus (Mouse)).